We begin with the raw amino-acid sequence, 21 residues long: MIASHLAFEKLSKLGSKHTML.

Leucine 21 is modified (leucine amide).

As to expression, expressed by the venom gland.

It localises to the secreted. Functionally, may inhibit growth of bacteria. This is M-lycotoxin-Ls4a from Lycosa singoriensis (Wolf spider).